We begin with the raw amino-acid sequence, 609 residues long: Serine/threonine-protein phosphatase 4 regulatory subunit 2 (609 aa).

Phosphoserine is present on S68. Positions 175–569 are disordered; the sequence is NNNGNADEGS…EEARVSPSAT (395 aa). Low complexity predominate over residues 183–194; it reads GSSPGAGSAGCA. Basic and acidic residues predominate over residues 201 to 225; sequence RSDDNDQPKAKKAKLEIDGEERSEA. 2 positions are modified to phosphoserine: S223 and S226. The segment covering 233–244 has biased composition (basic and acidic residues); the sequence is VATRVKNEKDEK. S252 is subject to Phosphoserine. Acidic residues predominate over residues 258-270; the sequence is EIEEPDEEVDEAD. Composition is skewed to basic and acidic residues over residues 310 to 351 and 375 to 400; these read IEAE…KPDG and EPVKVKAENEKEEKKHAPIKTEKQDD. The span at 401–410 shows a compositional bias: acidic residues; the sequence is IDSTETDDAP. The segment covering 414 to 462 has biased composition (basic and acidic residues); that stretch reads KPAEEKIASSESKPKTKSEDDPEAETKKSQPEKTETEAAEKSVSDEKQA. T602 carries the post-translational modification Phosphothreonine. Position 603 is a phosphoserine (S603).

The protein belongs to the PPP4R2 family. Serine/threonine-protein phosphatase 4 (PP4) occurs in different assemblies of the catalytic and one or more regulatory subunits. Probably part of a PP4 PPP4C-PPP4R2-PPP4R3 complex containing Pp4-19C, PPP4R2r and flfl.

Its function is as follows. Regulatory subunit of serine/threonine-protein phosphatase 4 (PP4). The probable PP4 complex Pp4-19C-PPP4R2r-flfl (PPP4C-PPP4R2-PPP4R3) is required to prevent caspase induced cell death (in vitro). In Drosophila melanogaster (Fruit fly), this protein is Serine/threonine-protein phosphatase 4 regulatory subunit 2 (PPP4R2r).